The following is a 244-amino-acid chain: Probable metallo-hydrolase YhfI (244 aa).

Zn(2+)-binding residues include His-59, His-61, Asp-63, His-64, His-134, Asp-155, and His-211.

The protein belongs to the metallo-beta-lactamase superfamily. Zn(2+) is required as a cofactor.

The protein is Probable metallo-hydrolase YhfI (yhfI) of Bacillus subtilis (strain 168).